A 322-amino-acid polypeptide reads, in one-letter code: Lignin-forming anionic peroxidase (322 aa).

The signal sequence occupies residues 1 to 27 (MNTPTQSFRAKAAIFSLLLLSCMQCHA). Pyrrolidone carboxylic acid is present on glutamine 28. Intrachain disulfides connect cysteine 38/cysteine 118, cysteine 71/cysteine 76, cysteine 124/cysteine 318, and cysteine 203/cysteine 229. Histidine 69 functions as the Proton acceptor in the catalytic mechanism. Ca(2+)-binding residues include aspartate 70, valine 73, glycine 75, aspartate 77, and serine 79. Position 166 (proline 166) interacts with substrate. Residue histidine 196 participates in heme b binding. Threonine 197 is a Ca(2+) binding site. Asparagine 213 is a glycosylation site (N-linked (GlcNAc...) asparagine). The Ca(2+) site is built by aspartate 242, threonine 245, and aspartate 250.

This sequence belongs to the peroxidase family. Classical plant (class III) peroxidase subfamily. The cofactor is Ca(2+). Requires heme b as cofactor. In terms of tissue distribution, mesophyll protoplasts and to a much lesser extent, roots and germinating seeds.

It is found in the secreted. The catalysed reaction is 2 a phenolic donor + H2O2 = 2 a phenolic radical donor + 2 H2O. In terms of biological role, removal of H(2)O(2), oxidation of toxic reductants, biosynthesis and degradation of lignin, suberization, auxin catabolism, response to environmental stresses such as wounding, pathogen attack and oxidative stress. These functions might be dependent on each isozyme/isoform in each plant tissue. Its function is as follows. Plays an integral role in secondary cell wall biosynthesis by the polymerization of cinnamyl alcohols into lignin and by forming rigid cross-links between cellulose, pectin, hydroxy-proline-rich glycoproteins, and lignin. This Nicotiana sylvestris (Wood tobacco) protein is Lignin-forming anionic peroxidase.